The chain runs to 505 residues: Chromosomal replication initiator protein DnaA (505 aa).

The segment at 1-90 (MSVELWQQCV…RRSSAPRAAP (90 aa)) is domain I, interacts with DnaA modulators. The tract at residues 91-168 (NAPVSAAVAA…QVEGALKHTS (78 aa)) is domain II. Residues 169–385 (YLNRTFTFDT…GALKRVIAHS (217 aa)) form a domain III, AAA+ region region. ATP is bound by residues Gly213, Gly215, Lys216, and Thr217. The domain IV, binds dsDNA stretch occupies residues 386–505 (HFMGRDITIE…YKNLLRTLTT (120 aa)).

This sequence belongs to the DnaA family. As to quaternary structure, oligomerizes as a right-handed, spiral filament on DNA at oriC.

The protein resides in the cytoplasm. In terms of biological role, plays an essential role in the initiation and regulation of chromosomal replication. ATP-DnaA binds to the origin of replication (oriC) to initiate formation of the DNA replication initiation complex once per cell cycle. Binds the DnaA box (a 9 base pair repeat at the origin) and separates the double-stranded (ds)DNA. Forms a right-handed helical filament on oriC DNA; dsDNA binds to the exterior of the filament while single-stranded (ss)DNA is stabiized in the filament's interior. The ATP-DnaA-oriC complex binds and stabilizes one strand of the AT-rich DNA unwinding element (DUE), permitting loading of DNA polymerase. After initiation quickly degrades to an ADP-DnaA complex that is not apt for DNA replication. Binds acidic phospholipids. The chain is Chromosomal replication initiator protein DnaA from Pseudomonas putida (strain ATCC 700007 / DSM 6899 / JCM 31910 / BCRC 17059 / LMG 24140 / F1).